Reading from the N-terminus, the 265-residue chain is Ubiquinone biosynthesis protein COQ4 homolog, mitochondrial (265 aa).

Residues 1–30 constitute a mitochondrion transit peptide; the sequence is MMQRSWQSWRRGLTLGLASRRSYVASVEAP. 4 residues coordinate Zn(2+): H170, D171, H174, and E186.

Belongs to the COQ4 family. Component of a multi-subunit COQ enzyme complex. The cofactor is Zn(2+).

The protein resides in the mitochondrion inner membrane. The catalysed reaction is a 4-hydroxy-3-methoxy-5-(all-trans-polyprenyl)benzoate + H(+) = a 2-methoxy-6-(all-trans-polyprenyl)phenol + CO2. Its pathway is cofactor biosynthesis; ubiquinone biosynthesis. Functionally, lyase that catalyzes the C1-decarboxylation of 4-hydroxy-3-methoxy-5-(all-trans-polyprenyl)benzoic acid into 2-methoxy-6-(all-trans-polyprenyl)phenol during ubiquinone biosynthesis. The polypeptide is Ubiquinone biosynthesis protein COQ4 homolog, mitochondrial (Drosophila virilis (Fruit fly)).